We begin with the raw amino-acid sequence, 109 residues long: Iron-sulfur cluster assembly protein CyaY (109 aa).

The protein belongs to the frataxin family.

Involved in iron-sulfur (Fe-S) cluster assembly. May act as a regulator of Fe-S biogenesis. The polypeptide is Iron-sulfur cluster assembly protein CyaY (Shewanella sp. (strain ANA-3)).